The following is a 439-amino-acid chain: C4-dicarboxylate transport protein 1 (439 aa).

Transmembrane regions (helical) follow at residues 18–38 (VLYI…WLWP), 56–76 (LIKM…IAHV), 91–111 (IYFE…ANVI), 157–177 (GEIL…MSLG), 193–213 (AIFG…FGAM), and 231–251 (LIAT…GIIA).

It belongs to the dicarboxylate/amino acid:cation symporter (DAACS) (TC 2.A.23) family.

It is found in the cell inner membrane. Responsible for the transport of dicarboxylates such as succinate, fumarate, and malate from the periplasm across the membrane. The protein is C4-dicarboxylate transport protein 1 of Bradyrhizobium sp. (strain ORS 278).